The chain runs to 497 residues: tRNA-2-methylthio-N(6)-dimethylallyladenosine synthase (497 aa).

Residues 44–161 (KKVFVTTQGC…LPELYDQSHQ (118 aa)) form the MTTase N-terminal domain. Cys53, Cys90, Cys124, Cys205, Cys209, and Cys212 together coordinate [4Fe-4S] cluster. The region spanning 191-423 (RVEGFKAFVS…QKVIIDSTLA (233 aa)) is the Radical SAM core domain. Residues 426–494 (HEMVGTTTRV…PHMVKGEIEA (69 aa)) enclose the TRAM domain.

This sequence belongs to the methylthiotransferase family. MiaB subfamily. Monomer. [4Fe-4S] cluster is required as a cofactor.

The protein resides in the cytoplasm. The catalysed reaction is N(6)-dimethylallyladenosine(37) in tRNA + (sulfur carrier)-SH + AH2 + 2 S-adenosyl-L-methionine = 2-methylsulfanyl-N(6)-dimethylallyladenosine(37) in tRNA + (sulfur carrier)-H + 5'-deoxyadenosine + L-methionine + A + S-adenosyl-L-homocysteine + 2 H(+). Catalyzes the methylthiolation of N6-(dimethylallyl)adenosine (i(6)A), leading to the formation of 2-methylthio-N6-(dimethylallyl)adenosine (ms(2)i(6)A) at position 37 in tRNAs that read codons beginning with uridine. The polypeptide is tRNA-2-methylthio-N(6)-dimethylallyladenosine synthase (Psychrobacter cryohalolentis (strain ATCC BAA-1226 / DSM 17306 / VKM B-2378 / K5)).